The sequence spans 139 residues: D-ribose pyranase (139 aa).

The active-site Proton donor is His-20. Residues Asp-28, His-106, and 128–130 each bind substrate; that span reads YAN.

Belongs to the RbsD / FucU family. RbsD subfamily. As to quaternary structure, homodecamer.

The protein localises to the cytoplasm. It catalyses the reaction beta-D-ribopyranose = beta-D-ribofuranose. The protein operates within carbohydrate metabolism; D-ribose degradation; D-ribose 5-phosphate from beta-D-ribopyranose: step 1/2. Catalyzes the interconversion of beta-pyran and beta-furan forms of D-ribose. The sequence is that of D-ribose pyranase from Histophilus somni (strain 2336) (Haemophilus somnus).